A 397-amino-acid polypeptide reads, in one-letter code: Serpin B10 (397 aa).

The Nuclear localization signal motif lies at 74 to 77 (KKRK).

This sequence belongs to the serpin family. Ov-serpin subfamily. In terms of tissue distribution, expressed in many tissues, including brain, heart, kidney, liver, lung, prostate, skin, spleen and stomach.

The protein resides in the nucleus. Its subcellular location is the cytoplasm. Protease inhibitor that may play a role in the regulation of protease activities during hematopoiesis and apoptosis induced by TNF. May regulate protease activities in the cytoplasm and in the nucleus. Inhibits plasmin. This chain is Serpin B10 (Serpinb10), found in Rattus norvegicus (Rat).